Here is a 432-residue protein sequence, read N- to C-terminus: Transcriptional adapter 3-A (432 aa).

Disordered regions lie at residues 90–127 (HELGTPIKHSKPKKQKLDGKVSHASGPGPGRPKSRNMQ) and 275–314 (SPVEDSPIPEISGKESGTDGASTSPRSQNKPFSAPHTKSL). Positions 293–305 (DGASTSPRSQNKP) are enriched in polar residues. Residues 335–398 (ADDSEDEVLA…NEVMDAFRKI (64 aa)) are a coiled coil.

The protein belongs to the NGG1 family.

It localises to the nucleus. Its function is as follows. Functions as a component of the PCAF complex. The PCAF complex is capable of efficiently acetylating histones in a nucleosomal context. The chain is Transcriptional adapter 3-A (tada3-a) from Xenopus laevis (African clawed frog).